The sequence spans 303 residues: Probable 5-dehydro-4-deoxyglucarate dehydratase (303 aa).

This sequence belongs to the DapA family.

The catalysed reaction is 5-dehydro-4-deoxy-D-glucarate + H(+) = 2,5-dioxopentanoate + CO2 + H2O. Its pathway is carbohydrate acid metabolism; D-glucarate degradation; 2,5-dioxopentanoate from D-glucarate: step 2/2. The protein is Probable 5-dehydro-4-deoxyglucarate dehydratase of Ectopseudomonas mendocina (strain ymp) (Pseudomonas mendocina).